Consider the following 294-residue polypeptide: Small ribosomal subunit protein uS2 (294 aa).

Over residues 232 to 245 the composition is skewed to basic and acidic residues; the sequence is RAAEQDKAADDKAQ. A disordered region spans residues 232 to 294; the sequence is RAAEQDKAAD…GSEEDGEAAN (63 aa). Low complexity predominate over residues 246-265; that stretch reads EQAAAEAAKPEPAAPAPAAE.

The protein belongs to the universal ribosomal protein uS2 family.

The polypeptide is Small ribosomal subunit protein uS2 (Desulfatibacillum aliphaticivorans).